Reading from the N-terminus, the 231-residue chain is Large ribosomal subunit protein uL1 (231 aa).

It belongs to the universal ribosomal protein uL1 family. As to quaternary structure, part of the 50S ribosomal subunit.

Functionally, binds directly to 23S rRNA. The L1 stalk is quite mobile in the ribosome, and is involved in E site tRNA release. In terms of biological role, protein L1 is also a translational repressor protein, it controls the translation of the L11 operon by binding to its mRNA. This Acinetobacter baumannii (strain AB0057) protein is Large ribosomal subunit protein uL1.